A 245-amino-acid polypeptide reads, in one-letter code: tRNA1(Val) (adenine(37)-N6)-methyltransferase (245 aa).

This sequence belongs to the methyltransferase superfamily. tRNA (adenine-N(6)-)-methyltransferase family.

It is found in the cytoplasm. The enzyme catalyses adenosine(37) in tRNA1(Val) + S-adenosyl-L-methionine = N(6)-methyladenosine(37) in tRNA1(Val) + S-adenosyl-L-homocysteine + H(+). Its function is as follows. Specifically methylates the adenine in position 37 of tRNA(1)(Val) (anticodon cmo5UAC). The polypeptide is tRNA1(Val) (adenine(37)-N6)-methyltransferase (Escherichia fergusonii (strain ATCC 35469 / DSM 13698 / CCUG 18766 / IAM 14443 / JCM 21226 / LMG 7866 / NBRC 102419 / NCTC 12128 / CDC 0568-73)).